The sequence spans 63 residues: DNA-directed RNA polymerase subunit omega (63 aa).

The protein belongs to the RNA polymerase subunit omega family. The RNAP catalytic core consists of 2 alpha, 1 beta, 1 beta' and 1 omega subunit. When a sigma factor is associated with the core the holoenzyme is formed, which can initiate transcription.

The catalysed reaction is RNA(n) + a ribonucleoside 5'-triphosphate = RNA(n+1) + diphosphate. Its function is as follows. Promotes RNA polymerase assembly. Latches the N- and C-terminal regions of the beta' subunit thereby facilitating its interaction with the beta and alpha subunits. This is DNA-directed RNA polymerase subunit omega from Blochmanniella pennsylvanica (strain BPEN).